We begin with the raw amino-acid sequence, 349 residues long: Isopentenyl-diphosphate delta-isomerase (349 aa).

Arginine 9 to lysine 10 lines the substrate pocket. Residues alanine 65–threonine 67, serine 95, and asparagine 124 each bind FMN. Serine 95–histidine 97 is a substrate binding site. Glutamine 154 lines the substrate pocket. Glutamate 155 is a Mg(2+) binding site. Residues lysine 186, serine 211, threonine 216, glycine 262–arginine 264, and serine 283–arginine 284 each bind FMN.

Belongs to the IPP isomerase type 2 family. In terms of assembly, homooctamer. Dimer of tetramers. It depends on FMN as a cofactor. Requires NADPH as cofactor. Mg(2+) serves as cofactor.

Its subcellular location is the cytoplasm. The enzyme catalyses isopentenyl diphosphate = dimethylallyl diphosphate. Its function is as follows. Involved in the biosynthesis of isoprenoids. Catalyzes the 1,3-allylic rearrangement of the homoallylic substrate isopentenyl (IPP) to its allylic isomer, dimethylallyl diphosphate (DMAPP). The protein is Isopentenyl-diphosphate delta-isomerase of Staphylococcus epidermidis (strain ATCC 35984 / DSM 28319 / BCRC 17069 / CCUG 31568 / BM 3577 / RP62A).